A 230-amino-acid chain; its full sequence is Modulator of macroautophagy TMEM150B (230 aa).

Residue M1 is a topological domain, cytoplasmic. Residues 2 to 22 traverse the membrane as a helical segment; it reads WAWALLPICLTIWATAGIWIV. Residues 23–50 are Extracellular-facing; it reads YGMSVSNGSVNLTDGFPFISLCGTYPPQ. N-linked (GlcNAc...) asparagine glycosylation is found at N29 and N33. The chain crosses the membrane as a helical span at residues 51-71; it reads SCVFGQVLNVGAMLGVWISVI. At 72 to 83 the chain is on the cytoplasmic side; sequence RFQQIRDYGCHS. Residues 84–104 traverse the membrane as a helical segment; that stretch reads VLNSVSLAMGLLCALGTSIVG. Residues 105-115 are Extracellular-facing; the sequence is NFQQSNQLETH. The helical transmembrane segment at 116–136 threads the bilayer; that stretch reads LAGAFLAFVIGNIYFWMQTVL. The Cytoplasmic portion of the chain corresponds to 137–150; that stretch reads TYMVKPKHGGCYIG. The chain crosses the membrane as a helical span at residues 151–171; sequence PIRFCLSVACTALIVLMAVFL. The Extracellular portion of the chain corresponds to 172 to 183; sequence KLNMKSISAICE. A helical membrane pass occupies residues 184-204; it reads WIVAMILFLLYGLFSVDFWHL. Residues 205–230 lie on the Cytoplasmic side of the membrane; sequence DGHYFHVKKRTAIPNEVEVSTVTLNI.

It belongs to the DRAM/TMEM150 family.

It is found in the cell membrane. It localises to the endosome membrane. The protein localises to the cytoplasmic vesicle. Its subcellular location is the autophagosome membrane. Modulator of macroautophagy that causes accumulation of autophagosomes under basal conditions and enhances autophagic flux. Represses cell death and promotes long-term clonogenic survival of cells grown in the absence of glucose in a macroautophagy-independent manner. May have some role in extracellular matrix engulfment or growth factor receptor recycling, both of which can modulate cell survival. In Xenopus tropicalis (Western clawed frog), this protein is Modulator of macroautophagy TMEM150B.